The primary structure comprises 167 residues: NADH-ubiquinone oxidoreductase chain 6 (167 aa).

Transmembrane regions (helical) follow at residues 24–44 (PYFGALGLIVVSLVGCLIILA), 54–74 (LLLIYLGGMMVVFSYCTALVL), 85–105 (VLMKMALGVLVVVFLGYGGYL), and 135–155 (WLLIVFGCLGLFLALLVILEI).

This sequence belongs to the complex I subunit 6 family.

It localises to the mitochondrion membrane. It catalyses the reaction a ubiquinone + NADH + 5 H(+)(in) = a ubiquinol + NAD(+) + 4 H(+)(out). Core subunit of the mitochondrial membrane respiratory chain NADH dehydrogenase (Complex I) that is believed to belong to the minimal assembly required for catalysis. Complex I functions in the transfer of electrons from NADH to the respiratory chain. The immediate electron acceptor for the enzyme is believed to be ubiquinone. This Myxine glutinosa (Atlantic hagfish) protein is NADH-ubiquinone oxidoreductase chain 6 (MT-ND6).